Consider the following 236-residue polypeptide: MALDNKFVAKGLRLYSARSVANRTKTFVAKKNKVVAPKKVVAPVTPVEKTFGKGKRVIAAKASKFAPSIPAEIRSTAAKKVQQKVALRKSITPGTVLIILAGRFAGKRVVALKQLDSGLILITGPFKVNGVPLRRIDQRYVIATSTKIDVSSVKVAATINDAYFAAEKKSTTKSEGAFFSDEKKAEKKKIADSRVADQKSVDSAILAVLKKEKFLTVYLKTKFYLKKGEFPHQLKF.

This sequence belongs to the eukaryotic ribosomal protein eL6 family.

In Dictyostelium discoideum (Social amoeba), this protein is Large ribosomal subunit protein eL6 (rpl6).